The following is a 241-amino-acid chain: 1-(5-phosphoribosyl)-5-[(5-phosphoribosylamino)methylideneamino] imidazole-4-carboxamide isomerase (241 aa).

D8 functions as the Proton acceptor in the catalytic mechanism. The active-site Proton donor is D129.

The protein belongs to the HisA/HisF family.

It localises to the cytoplasm. It catalyses the reaction 1-(5-phospho-beta-D-ribosyl)-5-[(5-phospho-beta-D-ribosylamino)methylideneamino]imidazole-4-carboxamide = 5-[(5-phospho-1-deoxy-D-ribulos-1-ylimino)methylamino]-1-(5-phospho-beta-D-ribosyl)imidazole-4-carboxamide. Its pathway is amino-acid biosynthesis; L-histidine biosynthesis; L-histidine from 5-phospho-alpha-D-ribose 1-diphosphate: step 4/9. The protein is 1-(5-phosphoribosyl)-5-[(5-phosphoribosylamino)methylideneamino] imidazole-4-carboxamide isomerase of Rhodospirillum rubrum (strain ATCC 11170 / ATH 1.1.1 / DSM 467 / LMG 4362 / NCIMB 8255 / S1).